Consider the following 105-residue polypeptide: MHFIALIVAVCVAFAGASCPYSSGGIAAPPCPKNYLFSCQPNLVPAPCAQEAASYGSAGAYAEHIPFYVGYPNHQQVEQYQERIARAALIDGLRGLTQGIQDQQY.

Residues 1–17 form the signal peptide; it reads MHFIALIVAVCVAFAGA. Residues 25–62 form the VM domain; the sequence is GIAAPPCPKNYLFSCQPNLVPAPCAQEAASYGSAGAYA.

The protein belongs to the vitelline membrane family.

The protein resides in the secreted. Its function is as follows. Major early eggshell protein. This Drosophila ananassae (Fruit fly) protein is Vitelline membrane protein Vm32E.